Reading from the N-terminus, the 84-residue chain is Small nuclear ribonucleoprotein E (84 aa).

The Sm domain occupies 13–84; sequence INFIFKLLQQ…GDNITLIQAI (72 aa).

The protein belongs to the snRNP Sm proteins family. As to quaternary structure, component of the Sm core complex, present in spliceosomal snRNP U1, U2, U4/U6 and U5. The core complex contains smb1, smd1, smd2, smd3, sme1, smf1 and smg1 (Sm proteins B, D1, D2, D3, E, F and G, respectively), and is probably a heptameric ring structure.

The protein localises to the cytoplasm. Its subcellular location is the nucleus. In terms of biological role, involved in pre-mRNA splicing. Binds and is required for the stability of snRNA U1, U2, U4 and U5 which contain a highly conserved structural motif called the Sm binding site. Involved in cap modification. The protein is Small nuclear ribonucleoprotein E of Schizosaccharomyces pombe (strain 972 / ATCC 24843) (Fission yeast).